Reading from the N-terminus, the 469-residue chain is Extracellular endo-alpha-(1-&gt;5)-L-arabinanase 2 (469 aa).

The signal sequence occupies residues 1–26 (MFNRLFRVCFLAALIMAFTLPNSVYA). Asp-38 serves as the catalytic Proton acceptor. Substrate is bound by residues Asp-38, Asp-122, 168–171 (NVVD), 188–190 (SYS), and 220–224 (HSRIE). Glu-224 functions as the Proton donor in the catalytic mechanism. Ca(2+) is bound at residue His-318.

Belongs to the glycosyl hydrolase 43 family. In terms of assembly, homodimer. The cofactor is Ca(2+).

The protein localises to the secreted. It catalyses the reaction Endohydrolysis of (1-&gt;5)-alpha-arabinofuranosidic linkages in (1-&gt;5)-arabinans.. It participates in glycan metabolism; L-arabinan degradation. In terms of biological role, involved in the degradation of arabinan and is a key enzyme in the complete degradation of the plant cell wall. Catalyzes the internal cleavage of alpha-(1-&gt;5)-L-arabinofuranosyl residues of the alpha-1,5-L-arabinan to produce arabino-oligosaccharides and L-arabinose. It is also active toward linear branched sugar beet arabinan, and pectin from apple. This Bacillus subtilis (strain 168) protein is Extracellular endo-alpha-(1-&gt;5)-L-arabinanase 2 (abn2).